Consider the following 190-residue polypeptide: Peptidoglycan recognition protein 1 (190 aa).

The first 21 residues, 1–21, serve as a signal peptide directing secretion; that stretch reads MSRRYTPLAWVLLALLGLGAA. At Gln-22 the chain carries Pyrrolidone carboxylic acid. Disulfide bonds link Cys-24/Cys-148, Cys-40/Cys-85, and Cys-61/Cys-67. Residues 46–174 enclose the N-acetylmuramoyl-L-alanine amidase domain; sequence QPVRYVVVSH…RDVQQTLSPG (129 aa).

This sequence belongs to the N-acetylmuramoyl-L-alanine amidase 2 family. As to quaternary structure, homodimer; disulfide-linked.

Its subcellular location is the secreted. It localises to the cytoplasmic granule. Innate immunity protein that plays several important functions in antimicrobial and antitumor defense systems. Acts as a pattern receptor that binds to murein peptidoglycans (PGN) of Gram-positive bacteria and thus provides bactericidal activity. Forms an equimolar complex with heat shock protein HSPA1A and induces programmed cell death through apoptosis and necroptosis in tumor cell lines by activating the TNFR1 receptor on the target cell membrane. In addition, acts in complex with the Ca(2+)-binding protein S100A4 as a chemoattractant able to induce lymphocyte movement. Mechanistically, this complex acts as a ligand of the chemotactic receptors CCR5 and CXCR3 which are present on the cells of the immune system. Promotes also the activation of lymphocytes that become able to kill virus-infected cells as well as tumor cells by modulating the spectrum of their target-cell specificity. Induction of cytotoxicity on monocyte surface requires interaction with TREM1 receptor. This is Peptidoglycan recognition protein 1 (PGLYRP1) from Bos indicus (Zebu).